A 357-amino-acid polypeptide reads, in one-letter code: DnaJ homolog subfamily C member 25 (357 aa).

The helical transmembrane segment at 19–39 (WLLLAPLLLVPLLVRPAEALV) threads the bilayer. In terms of domain architecture, J spans 48–121 (DCYEVLGVSR…ETRKDYDYML (74 aa)). The next 2 helical transmembrane spans lie at 147 to 167 (VVIL…WWNS) and 241 to 261 (LLLF…AWYC).

This sequence belongs to the DNAJC25 family.

It is found in the membrane. In Rattus norvegicus (Rat), this protein is DnaJ homolog subfamily C member 25 (Dnajc25).